The chain runs to 184 residues: Ribosome-recycling factor (184 aa).

This sequence belongs to the RRF family.

It is found in the cytoplasm. In terms of biological role, responsible for the release of ribosomes from messenger RNA at the termination of protein biosynthesis. May increase the efficiency of translation by recycling ribosomes from one round of translation to another. In Cutibacterium acnes (strain DSM 16379 / KPA171202) (Propionibacterium acnes), this protein is Ribosome-recycling factor.